We begin with the raw amino-acid sequence, 447 residues long: GA-binding protein subunit beta-2 (447 aa).

ANK repeat units follow at residues 5-34 (DLGK…PFTT), 37-66 (LGTS…SRDA), 70-99 (VDRT…DVNA), 103-132 (LKMT…DVHA), and 136-166 (FDKS…QVNA). Residue serine 253 is modified to Phosphoserine. A coiled-coil region spans residues 345–395 (EESKEGTERELLQQRLQEANRRAQEYRHQLLKKEQEAEQYRLRLEAMARQQ). The disordered stretch occupies residues 418-447 (REMEERETEVTGAVGTAEPHTGVSMETVST).

In terms of assembly, heterotetramer of two alpha and two beta subunits. The C-terminal is necessary for the formation of a heterotetrameric GABP-alpha-2/beta-2 complex, and also facilitates homotypic dimerization. Interacts with ADGRB2.

The protein localises to the nucleus. In terms of biological role, may function as transcription factor capable of interacting with purine rich repeats (GA repeats). In Bos taurus (Bovine), this protein is GA-binding protein subunit beta-2 (GABPB2).